The primary structure comprises 118 residues: Waprin-Enh1 (118 aa).

The signal sequence occupies residues 1-24 (MKTLTGLLLVGLLALWIGLPSTSS). 2 consecutive WAP domains span residues 25-72 (KILF…RSCR) and 74-118 (PPVL…RICK). Intrachain disulfides connect C30–C63, C40–C67, C50–C62, C56–C71, C81–C109, C88–C113, C96–C108, and C102–C117.

This sequence belongs to the venom waprin family. In terms of tissue distribution, expressed by the venom gland.

Its subcellular location is the secreted. Damages membranes of susceptible bacteria. Has no hemolytic activity. Not toxic to mice. Does not inhibit the proteinases elastase and cathepsin G. This chain is Waprin-Enh1, found in Pseudoferania polylepis (Macleay's water snake).